A 56-amino-acid polypeptide reads, in one-letter code: Large ribosomal subunit protein bL32 (56 aa).

Residues 1–16 (MAVQKNRKTRSKRGMR) show a composition bias toward basic residues. Residues 1 to 28 (MAVQKNRKTRSKRGMRRSHDALTTAALS) are disordered.

Belongs to the bacterial ribosomal protein bL32 family.

The sequence is that of Large ribosomal subunit protein bL32 from Vibrio campbellii (strain ATCC BAA-1116).